A 201-amino-acid polypeptide reads, in one-letter code: Large ribosomal subunit protein uL4 (201 aa).

The segment at Ala45 to Gly71 is disordered.

It belongs to the universal ribosomal protein uL4 family. Part of the 50S ribosomal subunit.

Its function is as follows. One of the primary rRNA binding proteins, this protein initially binds near the 5'-end of the 23S rRNA. It is important during the early stages of 50S assembly. It makes multiple contacts with different domains of the 23S rRNA in the assembled 50S subunit and ribosome. Functionally, forms part of the polypeptide exit tunnel. The polypeptide is Large ribosomal subunit protein uL4 (Shewanella halifaxensis (strain HAW-EB4)).